Consider the following 199-residue polypeptide: Small ribosomal subunit protein uS2 (199 aa).

It belongs to the universal ribosomal protein uS2 family.

The chain is Small ribosomal subunit protein uS2 (rps2) from Thermoplasma acidophilum (strain ATCC 25905 / DSM 1728 / JCM 9062 / NBRC 15155 / AMRC-C165).